Here is a 373-residue protein sequence, read N- to C-terminus: MEVASAVAEPDACSLDHYLSLPDHSMDERIAAARARLGASTVLLGHHYQRDEVVRFADFTGDSYKLSKIAAETEAKYVVFCGVHFMAESADVLGRSEQHVILPDLNAGCSMADMAEISQVEACWETLLGAGLGAEQVMPLTYMNSTAAIKAFCGERGGLVCTSSNARKAFEWAFARAEKILFLPDQHLGRNTAFAMGIGLDEMVVFDPWQIGGGVPAEKLRAAKVILWKGHCSVHQRFLPEHVDRVRAKYEGIRVVVHPECRWEVCQKADALGSTERIIAEVEEAPEGTMFAIGTEIHLVNRLAKRFAPLGKKIITLDDTGCLCTTMYRISPQHLAWALENLLEGRVVNQIKVTDEVKHWARVALDRMLEIRG.

Residues H46 and S63 each contribute to the iminosuccinate site. C109 contributes to the [4Fe-4S] cluster binding site. Iminosuccinate-binding positions include 142 to 144 and S163; that span reads YMN. A [4Fe-4S] cluster-binding site is contributed by C232. Residues 258-260 and T275 each bind iminosuccinate; that span reads HPE. C324 is a binding site for [4Fe-4S] cluster.

The protein belongs to the quinolinate synthase family. Type 3 subfamily. The cofactor is [4Fe-4S] cluster.

The protein resides in the cytoplasm. The catalysed reaction is iminosuccinate + dihydroxyacetone phosphate = quinolinate + phosphate + 2 H2O + H(+). Its pathway is cofactor biosynthesis; NAD(+) biosynthesis; quinolinate from iminoaspartate: step 1/1. In terms of biological role, catalyzes the condensation of iminoaspartate with dihydroxyacetone phosphate to form quinolinate. The chain is Quinolinate synthase from Acidobacterium capsulatum (strain ATCC 51196 / DSM 11244 / BCRC 80197 / JCM 7670 / NBRC 15755 / NCIMB 13165 / 161).